We begin with the raw amino-acid sequence, 105 residues long: Small ribosomal subunit protein eS10B (105 aa).

The protein belongs to the eukaryotic ribosomal protein eS10 family. In terms of assembly, component of the small ribosomal subunit (SSU). Mature yeast ribosomes consist of a small (40S) and a large (60S) subunit. The 40S small subunit contains 1 molecule of ribosomal RNA (18S rRNA) and 33 different proteins (encoded by 57 genes). The large 60S subunit contains 3 rRNA molecules (25S, 5.8S and 5S rRNA) and 46 different proteins (encoded by 81 genes). eS10 interacts with GCN1 (via middle region); this interaction is direct and promotes GCN2 kinase activity. In terms of processing, the N-terminus is not modified.

It is found in the cytoplasm. Its function is as follows. Component of the ribosome, a large ribonucleoprotein complex responsible for the synthesis of proteins in the cell. The small ribosomal subunit (SSU) binds messenger RNAs (mRNAs) and translates the encoded message by selecting cognate aminoacyl-transfer RNA (tRNA) molecules. The large subunit (LSU) contains the ribosomal catalytic site termed the peptidyl transferase center (PTC), which catalyzes the formation of peptide bonds, thereby polymerizing the amino acids delivered by tRNAs into a polypeptide chain. The nascent polypeptides leave the ribosome through a tunnel in the LSU and interact with protein factors that function in enzymatic processing, targeting, and the membrane insertion of nascent chains at the exit of the ribosomal tunnel. eS10 plays a role as a positive regulator of the GCN2 kinase activity by stimulating GCN1-mediated GCN2 activation. In Saccharomyces cerevisiae (strain ATCC 204508 / S288c) (Baker's yeast), this protein is Small ribosomal subunit protein eS10B.